A 111-amino-acid chain; its full sequence is Large ribosomal subunit protein uL23 (111 aa).

Belongs to the universal ribosomal protein uL23 family. In terms of assembly, part of the 50S ribosomal subunit. Contacts protein L29, and trigger factor when it is bound to the ribosome.

One of the early assembly proteins it binds 23S rRNA. One of the proteins that surrounds the polypeptide exit tunnel on the outside of the ribosome. Forms the main docking site for trigger factor binding to the ribosome. This chain is Large ribosomal subunit protein uL23, found in Nitrosomonas eutropha (strain DSM 101675 / C91 / Nm57).